A 219-amino-acid chain; its full sequence is Uracil-DNA glycosylase (219 aa).

Aspartate 61 (proton acceptor) is an active-site residue.

It belongs to the uracil-DNA glycosylase (UDG) superfamily. UNG family.

The protein localises to the cytoplasm. It carries out the reaction Hydrolyzes single-stranded DNA or mismatched double-stranded DNA and polynucleotides, releasing free uracil.. Excises uracil residues from the DNA which can arise as a result of misincorporation of dUMP residues by DNA polymerase or due to deamination of cytosine. In Exiguobacterium sibiricum (strain DSM 17290 / CCUG 55495 / CIP 109462 / JCM 13490 / 255-15), this protein is Uracil-DNA glycosylase.